A 370-amino-acid polypeptide reads, in one-letter code: Putative 8-amino-7-oxononanoate synthase (370 aa).

Residue R20 coordinates substrate. 95–96 contacts pyridoxal 5'-phosphate; it reads GY. Position 120 (H120) interacts with substrate. Pyridoxal 5'-phosphate-binding positions include S167, 192–195, and 223–226; these read DDAH and TLSK. K226 bears the N6-(pyridoxal phosphate)lysine mark. Residue T337 participates in substrate binding.

This sequence belongs to the class-II pyridoxal-phosphate-dependent aminotransferase family. BioF subfamily. In terms of assembly, homodimer. Pyridoxal 5'-phosphate is required as a cofactor.

It catalyses the reaction 6-carboxyhexanoyl-[ACP] + L-alanine + H(+) = (8S)-8-amino-7-oxononanoate + holo-[ACP] + CO2. It functions in the pathway cofactor biosynthesis; biotin biosynthesis. Its function is as follows. Catalyzes the decarboxylative condensation of pimeloyl-[acyl-carrier protein] and L-alanine to produce 8-amino-7-oxononanoate (AON), [acyl-carrier protein], and carbon dioxide. This Methanococcus vannielii (strain ATCC 35089 / DSM 1224 / JCM 13029 / OCM 148 / SB) protein is Putative 8-amino-7-oxononanoate synthase (bioF).